Here is a 188-residue protein sequence, read N- to C-terminus: Elongation factor P (188 aa).

It belongs to the elongation factor P family.

Its subcellular location is the cytoplasm. The protein operates within protein biosynthesis; polypeptide chain elongation. Involved in peptide bond synthesis. Stimulates efficient translation and peptide-bond synthesis on native or reconstituted 70S ribosomes in vitro. Probably functions indirectly by altering the affinity of the ribosome for aminoacyl-tRNA, thus increasing their reactivity as acceptors for peptidyl transferase. This chain is Elongation factor P, found in Chlorobaculum tepidum (strain ATCC 49652 / DSM 12025 / NBRC 103806 / TLS) (Chlorobium tepidum).